A 162-amino-acid polypeptide reads, in one-letter code: Globin CTT-VIIB-7 (162 aa).

Residues 1-16 (MKFFAVLALCVVGAIA) form the signal peptide. Positions 18–162 (PLSADEANLV…TYAVALKSLE (145 aa)) constitute a Globin domain. 2 residues coordinate heme b: His76 and His111.

It belongs to the globin family. In terms of assembly, homodimer.

The chain is Globin CTT-VIIB-7 (CTT-7B7) from Chironomus thummi piger (Midge).